The primary structure comprises 481 residues: Proline--tRNA ligase (481 aa).

This sequence belongs to the class-II aminoacyl-tRNA synthetase family. ProS type 3 subfamily. In terms of assembly, homodimer.

Its subcellular location is the cytoplasm. It carries out the reaction tRNA(Pro) + L-proline + ATP = L-prolyl-tRNA(Pro) + AMP + diphosphate. Functionally, catalyzes the attachment of proline to tRNA(Pro) in a two-step reaction: proline is first activated by ATP to form Pro-AMP and then transferred to the acceptor end of tRNA(Pro). The polypeptide is Proline--tRNA ligase (Chlorobium limicola (strain DSM 245 / NBRC 103803 / 6330)).